We begin with the raw amino-acid sequence, 436 residues long: Adenylosuccinate synthetase (436 aa).

GTP contacts are provided by residues 12 to 18 (GDEGKGK) and 40 to 42 (GHT). Catalysis depends on Asp13, which acts as the Proton acceptor. 2 residues coordinate Mg(2+): Asp13 and Gly40. Residues 13 to 16 (DEGK), 38 to 41 (NAGH), Thr130, Arg144, Gln230, Thr245, and Arg309 each bind IMP. His41 serves as the catalytic Proton donor. Residue 305–311 (TTTGRPR) coordinates substrate. Residues Arg311, 337–339 (KLD), and 419–421 (SVG) contribute to the GTP site.

Belongs to the adenylosuccinate synthetase family. In terms of assembly, homodimer. Requires Mg(2+) as cofactor.

The protein localises to the cytoplasm. It catalyses the reaction IMP + L-aspartate + GTP = N(6)-(1,2-dicarboxyethyl)-AMP + GDP + phosphate + 2 H(+). Its pathway is purine metabolism; AMP biosynthesis via de novo pathway; AMP from IMP: step 1/2. In terms of biological role, plays an important role in the de novo pathway of purine nucleotide biosynthesis. Catalyzes the first committed step in the biosynthesis of AMP from IMP. This is Adenylosuccinate synthetase from Myxococcus xanthus (strain DK1622).